Consider the following 303-residue polypeptide: Acetylglutamate kinase (303 aa).

Substrate contacts are provided by residues 76 to 77 (GG), Arg98, and Asn199.

The protein belongs to the acetylglutamate kinase family. ArgB subfamily.

It localises to the cytoplasm. The enzyme catalyses N-acetyl-L-glutamate + ATP = N-acetyl-L-glutamyl 5-phosphate + ADP. It participates in amino-acid biosynthesis; L-arginine biosynthesis; N(2)-acetyl-L-ornithine from L-glutamate: step 2/4. Its function is as follows. Catalyzes the ATP-dependent phosphorylation of N-acetyl-L-glutamate. The chain is Acetylglutamate kinase from Clavibacter sepedonicus (Clavibacter michiganensis subsp. sepedonicus).